The following is a 250-amino-acid chain: tRNA (guanine-N(1)-)-methyltransferase (250 aa).

S-adenosyl-L-methionine contacts are provided by residues Gly113 and 133–138 (VGDYVL).

The protein belongs to the RNA methyltransferase TrmD family. As to quaternary structure, homodimer.

The protein localises to the cytoplasm. The enzyme catalyses guanosine(37) in tRNA + S-adenosyl-L-methionine = N(1)-methylguanosine(37) in tRNA + S-adenosyl-L-homocysteine + H(+). In terms of biological role, specifically methylates guanosine-37 in various tRNAs. The sequence is that of tRNA (guanine-N(1)-)-methyltransferase from Proteus mirabilis (strain HI4320).